A 143-amino-acid chain; its full sequence is Sirohydrochlorin cobaltochelatase (143 aa).

Catalysis depends on histidine 9, which acts as the Proton acceptor. Histidine 9 contacts Co(2+). Histidine 9 lines the Ni(2+) pocket. Substrate-binding positions include glutamate 45 and 70 to 75; that span reads LAHGIH. Histidine 75 contacts Co(2+). Histidine 75 contacts Ni(2+).

It belongs to the CbiX family. CbiXS subfamily. As to quaternary structure, homotetramer; dimer of dimers.

It carries out the reaction Co-sirohydrochlorin + 2 H(+) = sirohydrochlorin + Co(2+). The catalysed reaction is Ni-sirohydrochlorin + 2 H(+) = sirohydrochlorin + Ni(2+). Its pathway is cofactor biosynthesis; adenosylcobalamin biosynthesis; cob(II)yrinate a,c-diamide from sirohydrochlorin (anaerobic route): step 1/10. Catalyzes the insertion of Co(2+) into sirohydrochlorin as part of the anaerobic pathway to cobalamin biosynthesis. Involved in the biosynthesis of the unique nickel-containing tetrapyrrole coenzyme F430, the prosthetic group of methyl-coenzyme M reductase (MCR), which plays a key role in methanogenesis and anaerobic methane oxidation. Catalyzes the insertion of Ni(2+) into sirohydrochlorin to yield Ni-sirohydrochlorin. The protein is Sirohydrochlorin cobaltochelatase of Methanocaldococcus jannaschii (strain ATCC 43067 / DSM 2661 / JAL-1 / JCM 10045 / NBRC 100440) (Methanococcus jannaschii).